A 154-amino-acid polypeptide reads, in one-letter code: Ribosome maturation factor RimP (154 aa).

The protein belongs to the RimP family.

It is found in the cytoplasm. Required for maturation of 30S ribosomal subunits. The protein is Ribosome maturation factor RimP of Hydrogenobaculum sp. (strain Y04AAS1).